We begin with the raw amino-acid sequence, 394 residues long: Ketoisovalerate oxidoreductase subunit VorA (394 aa).

In terms of assembly, heterotetramer of one alpha, one beta, one delta and one gamma chain.

The catalysed reaction is 3-methyl-2-oxobutanoate + 2 oxidized [2Fe-2S]-[ferredoxin] + CoA = 2-methylpropanoyl-CoA + 2 reduced [2Fe-2S]-[ferredoxin] + CO2 + H(+). This Pyrococcus furiosus (strain ATCC 43587 / DSM 3638 / JCM 8422 / Vc1) protein is Ketoisovalerate oxidoreductase subunit VorA (vorA).